The following is a 154-amino-acid chain: Transcriptional repressor NrdR (154 aa).

A zinc finger lies at Cys-3–Cys-34. Positions Pro-49 to Glu-139 constitute an ATP-cone domain.

It belongs to the NrdR family. It depends on Zn(2+) as a cofactor.

Negatively regulates transcription of bacterial ribonucleotide reductase nrd genes and operons by binding to NrdR-boxes. This chain is Transcriptional repressor NrdR, found in Pseudomonas aeruginosa (strain LESB58).